Reading from the N-terminus, the 518-residue chain is Cytochrome P450 736A117 (518 aa).

Asn-12 is a glycosylation site (N-linked (GlcNAc...) asparagine). A helical transmembrane segment spans residues 17 to 37 (FLQPLAFTLLAIFLVLLYTWY). Asn-185, Asn-275, and Asn-356 each carry an N-linked (GlcNAc...) asparagine glycan. Cys-460 contacts heme.

Belongs to the cytochrome P450 family. Heme serves as cofactor. In terms of tissue distribution, expressed at similar levels in fruit kernel, seedlings, leaves, stems and buds.

It is found in the membrane. The protein is Cytochrome P450 736A117 of Prunus mume (Japanese apricot).